We begin with the raw amino-acid sequence, 478 residues long: Sulfate adenylyltransferase subunit 1 (478 aa).

The region spanning 24–240 (KSLLRFLTCG…VLENVDIDAD (217 aa)) is the tr-type G domain. Positions 33 to 40 (GSVDDGKS) are G1. GTP is bound at residue 33–40 (GSVDDGKS). The G2 stretch occupies residues 91 to 95 (GITID). Residues 112 to 115 (DTPG) are G3. GTP-binding positions include 112-116 (DTPGH) and 167-170 (NKMD). Residues 167–170 (NKMD) are G4. Positions 206 to 208 (SAL) are G5.

It belongs to the TRAFAC class translation factor GTPase superfamily. Classic translation factor GTPase family. CysN/NodQ subfamily. Heterodimer composed of CysD, the smaller subunit, and CysN.

It catalyses the reaction sulfate + ATP + H(+) = adenosine 5'-phosphosulfate + diphosphate. It functions in the pathway sulfur metabolism; hydrogen sulfide biosynthesis; sulfite from sulfate: step 1/3. With CysD forms the ATP sulfurylase (ATPS) that catalyzes the adenylation of sulfate producing adenosine 5'-phosphosulfate (APS) and diphosphate, the first enzymatic step in sulfur assimilation pathway. APS synthesis involves the formation of a high-energy phosphoric-sulfuric acid anhydride bond driven by GTP hydrolysis by CysN coupled to ATP hydrolysis by CysD. The polypeptide is Sulfate adenylyltransferase subunit 1 (Aliivibrio fischeri (strain ATCC 700601 / ES114) (Vibrio fischeri)).